A 603-amino-acid chain; its full sequence is Zyxin (603 aa).

The span at methionine 1–leucine 13 shows a compositional bias: pro residues. Disordered stretches follow at residues methionine 1–proline 131, threonine 166–serine 193, alanine 218–glycine 237, arginine 310–serine 333, and leucine 363–threonine 395. Residues valine 69–tyrosine 95 are compositionally biased toward basic and acidic residues. The span at glutamate 184–serine 193 shows a compositional bias: polar residues. Residues alanine 218–asparagine 234 show a composition bias toward low complexity. 3 stretches are compositionally biased toward polar residues: residues threonine 315–serine 333, leucine 363–isoleucine 373, and proline 382–alanine 391. LIM zinc-binding domains lie at asparagine 409–lysine 470, cysteine 471–proline 529, and arginine 530–serine 601.

The protein belongs to the zyxin/ajuba family. In terms of assembly, interacts with dyc-1. Interacts with glh-1 and glh-3. As to expression, expressed in neurons and body wall muscle. Expressed in pharyngeal, enteric and uterine muscles and in spermatheca.

The protein resides in the nucleus. It localises to the cytoplasm. Its subcellular location is the myofibril. It is found in the sarcomere. The protein localises to the m line. The protein resides in the cell projection. It localises to the axon. Its subcellular location is the cell junction. It is found in the focal adhesion. The protein localises to the cytoskeleton. In terms of biological role, functions both as a mechanical stabilizer (via LIM domains) of focal adhesions, and as a sensor component for muscle cell damage (via N-terminus). Regulates, stabilizes and maintains posterior lateral mechanosensory (PLM) synaptic branch extension and new synapse formation and growth during larval development. The protein is Zyxin of Caenorhabditis elegans.